Here is a 469-residue protein sequence, read N- to C-terminus: IME2-dependent-signaling protein (469 aa).

Methionine 1 is subject to N-acetylmethionine. Position 13 is a phosphothreonine (threonine 13). 3 disordered regions span residues 22 to 55 (KSWSESQDNPLLLNFNNSPIGTPTDRYSPEPATM), 67 to 92 (ARGSTQQQQRLYGSSQTREKSDQQQQ), and 117 to 143 (DLTLGSPEPSERASPIRQPSVDVPPLT). 3 positions are modified to phosphoserine: serine 23, serine 27, and serine 39. 2 stretches are compositionally biased toward polar residues: residues 25 to 42 (SESQDNPLLLNFNNSPIG) and 67 to 82 (ARGSTQQQQRLYGSSQ). Serine 122, serine 130, serine 136, serine 147, and serine 148 each carry phosphoserine.

In terms of biological role, seems to act indirectly to modify IME2 activity, thus permitting IME2 to carry out later meiotic functions. This Saccharomyces cerevisiae (strain ATCC 204508 / S288c) (Baker's yeast) protein is IME2-dependent-signaling protein (IDS2).